A 715-amino-acid chain; its full sequence is ATP-dependent RecD2 DNA helicase (715 aa).

The interval 1 to 150 is not required for helicase activity; the sequence is MSAALPAEPF…STLHKMVSSW (150 aa). Residues Q343 and 363 to 367 each bind ATP; that span reads GTGKS. 2 consecutive DNA-binding regions follow at residues G391 and 407–414; that span reads TVHRLLGY. An ATP-binding site is contributed by Q466. Residue V470 is a DNA-binding region. An ATP-binding site is contributed by R493. 3 DNA-binding regions span residues 554–555, 596–604, and 644–647; these read RK, NDYNNEIFN, and TVHR. An ATP-binding site is contributed by R679.

Belongs to the RecD family. RecD2 subfamily. As to quaternary structure, monomer; homodimers seem to be inactive.

It carries out the reaction Couples ATP hydrolysis with the unwinding of duplex DNA at the replication fork by translocating in the 5'-3' direction. This creates two antiparallel DNA single strands (ssDNA). The leading ssDNA polymer is the template for DNA polymerase III holoenzyme which synthesizes a continuous strand.. The catalysed reaction is ATP + H2O = ADP + phosphate + H(+). Its function is as follows. DNA-dependent ATPase (ssDNA stimulates the ATPase better than dsDNA) and ATP-dependent 5'-3' DNA helicase. Plays a role in an antioxidant pathway. Involved in DNA damage repair and/or recombination. Appears to move along DNA in single base steps, powered by hydrolysis of 1 molecule of ATP. Has low processivity, unwinds about 15-20 base pairs/second. Short (20 bp) substrates with 5'-overhangs or forked ends are the best substrates, is much less efficient on 52 or 76 bp substrates with 5'-overhangs. The presence of single-stranded DNA-binding protein (SSB) increases unwinding 4-5 fold. Has no activity on blunt DNA or DNA with 3'-overhangs. Requires at least 10 bases of 5'-ssDNA for helicase activity. The protein is ATP-dependent RecD2 DNA helicase of Deinococcus radiodurans (strain ATCC 13939 / DSM 20539 / JCM 16871 / CCUG 27074 / LMG 4051 / NBRC 15346 / NCIMB 9279 / VKM B-1422 / R1).